Here is a 283-residue protein sequence, read N- to C-terminus: Pantothenate synthetase (283 aa).

ATP is bound at residue 26–33; the sequence is MGNLHEGH. The active-site Proton donor is H33. A (R)-pantoate-binding site is contributed by Q57. Q57 contributes to the beta-alanine binding site. 144 to 147 lines the ATP pocket; that stretch reads GKKD. A (R)-pantoate-binding site is contributed by Q150. 181 to 184 contacts ATP; sequence LSSR.

Belongs to the pantothenate synthetase family. In terms of assembly, homodimer.

Its subcellular location is the cytoplasm. It catalyses the reaction (R)-pantoate + beta-alanine + ATP = (R)-pantothenate + AMP + diphosphate + H(+). The protein operates within cofactor biosynthesis; (R)-pantothenate biosynthesis; (R)-pantothenate from (R)-pantoate and beta-alanine: step 1/1. Its function is as follows. Catalyzes the condensation of pantoate with beta-alanine in an ATP-dependent reaction via a pantoyl-adenylate intermediate. The chain is Pantothenate synthetase from Variovorax paradoxus (strain S110).